We begin with the raw amino-acid sequence, 473 residues long: ATP synthase subunit beta (473 aa).

158-165 (GGAGVGKT) serves as a coordination point for ATP.

Belongs to the ATPase alpha/beta chains family. F-type ATPases have 2 components, CF(1) - the catalytic core - and CF(0) - the membrane proton channel. CF(1) has five subunits: alpha(3), beta(3), gamma(1), delta(1), epsilon(1). CF(0) has three main subunits: a(1), b(2) and c(9-12). The alpha and beta chains form an alternating ring which encloses part of the gamma chain. CF(1) is attached to CF(0) by a central stalk formed by the gamma and epsilon chains, while a peripheral stalk is formed by the delta and b chains.

It localises to the cell membrane. The enzyme catalyses ATP + H2O + 4 H(+)(in) = ADP + phosphate + 5 H(+)(out). Its function is as follows. Produces ATP from ADP in the presence of a proton gradient across the membrane. The catalytic sites are hosted primarily by the beta subunits. This Bacillus sp. (strain PS3) protein is ATP synthase subunit beta.